The chain runs to 296 residues: Phosphatidylglycerol--prolipoprotein diacylglyceryl transferase (296 aa).

The next 7 membrane-spanning stretches (helical) occupy residues 17 to 37, 59 to 79, 97 to 117, 129 to 149, 203 to 223, 230 to 250, and 265 to 285; these read LAVR…IVVG, MMFY…VLFY, GGMS…LFAW, FVAP…FING, PSQL…LFFF, LGAV…TVEF, and LSMG…LLVW. Residue arginine 142 coordinates a 1,2-diacyl-sn-glycero-3-phospho-(1'-sn-glycerol).

It belongs to the Lgt family.

It localises to the cell inner membrane. It carries out the reaction L-cysteinyl-[prolipoprotein] + a 1,2-diacyl-sn-glycero-3-phospho-(1'-sn-glycerol) = an S-1,2-diacyl-sn-glyceryl-L-cysteinyl-[prolipoprotein] + sn-glycerol 1-phosphate + H(+). Its pathway is protein modification; lipoprotein biosynthesis (diacylglyceryl transfer). Functionally, catalyzes the transfer of the diacylglyceryl group from phosphatidylglycerol to the sulfhydryl group of the N-terminal cysteine of a prolipoprotein, the first step in the formation of mature lipoproteins. This is Phosphatidylglycerol--prolipoprotein diacylglyceryl transferase from Burkholderia ambifaria (strain MC40-6).